Here is a 485-residue protein sequence, read N- to C-terminus: Glutamyl-tRNA(Gln) amidotransferase subunit A (485 aa).

Catalysis depends on charge relay system residues Lys80 and Ser155. Ser179 acts as the Acyl-ester intermediate in catalysis.

It belongs to the amidase family. GatA subfamily. Heterotrimer of A, B and C subunits.

The enzyme catalyses L-glutamyl-tRNA(Gln) + L-glutamine + ATP + H2O = L-glutaminyl-tRNA(Gln) + L-glutamate + ADP + phosphate + H(+). Its function is as follows. Allows the formation of correctly charged Gln-tRNA(Gln) through the transamidation of misacylated Glu-tRNA(Gln) in organisms which lack glutaminyl-tRNA synthetase. The reaction takes place in the presence of glutamine and ATP through an activated gamma-phospho-Glu-tRNA(Gln). This is Glutamyl-tRNA(Gln) amidotransferase subunit A from Endomicrobium trichonymphae.